Consider the following 131-residue polypeptide: Arsenate reductase (131 aa).

Residues C10, C82, and C89 each act as nucleophile in the active site. Cystine bridges form between C10–C82 and C82–C89.

It belongs to the low molecular weight phosphotyrosine protein phosphatase family. Thioredoxin-coupled ArsC subfamily.

The protein resides in the cytoplasm. The enzyme catalyses arsenate + [thioredoxin]-dithiol + H(+) = arsenite + [thioredoxin]-disulfide + H2O. Its function is as follows. Catalyzes the reduction of arsenate [As(V)] to arsenite [As(III)]. This Staphylococcus aureus (strain N315) protein is Arsenate reductase.